Here is a 215-residue protein sequence, read N- to C-terminus: Pyridoxine/pyridoxamine 5'-phosphate oxidase (215 aa).

Substrate contacts are provided by residues 9–12 (RRDY) and Lys69. FMN is bound by residues 64 to 69 (RVLLLK), 79 to 80 (FT), Lys86, and Gln108. 3 residues coordinate substrate: Tyr126, Arg130, and Ser134. Residues 143 to 144 (QS) and Trp188 contribute to the FMN site. 194 to 196 (RLH) serves as a coordination point for substrate. Arg198 provides a ligand contact to FMN.

This sequence belongs to the pyridoxamine 5'-phosphate oxidase family. In terms of assembly, homodimer. FMN is required as a cofactor.

The catalysed reaction is pyridoxamine 5'-phosphate + O2 + H2O = pyridoxal 5'-phosphate + H2O2 + NH4(+). It carries out the reaction pyridoxine 5'-phosphate + O2 = pyridoxal 5'-phosphate + H2O2. The protein operates within cofactor metabolism; pyridoxal 5'-phosphate salvage; pyridoxal 5'-phosphate from pyridoxamine 5'-phosphate: step 1/1. It participates in cofactor metabolism; pyridoxal 5'-phosphate salvage; pyridoxal 5'-phosphate from pyridoxine 5'-phosphate: step 1/1. Functionally, catalyzes the oxidation of either pyridoxine 5'-phosphate (PNP) or pyridoxamine 5'-phosphate (PMP) into pyridoxal 5'-phosphate (PLP). In Pseudomonas putida (strain W619), this protein is Pyridoxine/pyridoxamine 5'-phosphate oxidase.